Consider the following 62-residue polypeptide: Large ribosomal subunit protein bL33 (62 aa).

Belongs to the bacterial ribosomal protein bL33 family.

This Parabacteroides distasonis (strain ATCC 8503 / DSM 20701 / CIP 104284 / JCM 5825 / NCTC 11152) protein is Large ribosomal subunit protein bL33.